A 59-amino-acid polypeptide reads, in one-letter code: Prokaryotic ubiquitin-like protein UBact (59 aa).

Positions 1–59 (MEMTDPLRREEKKESSPDPKEESGPSRPDVSRPGRDSLLKRMKKVDPKQSEKYKQRTGQ) are disordered. Gln-59 bears the Deamidated glutamine mark. Residue Gln-59 forms an Isoglutamyl lysine isopeptide (Gln-Lys) (interchain with K-? in acceptor proteins) linkage.

It belongs to the ubiquitin-like protein UBact family. In terms of processing, may be modified by deamidation of its C-terminal glutamine to glutamate by the adjacently encoded deamidase. This could be a prerequisite to the subsequent conjugation, as shown in the other prokaryotic ubiquitin-like protein Pup.

Its function is as follows. May function as a protein modifier covalently attached to lysine residues of substrate proteins. This may serve to target the modified proteins for degradation by proteasomes. This Nitrospina gracilis (strain 3/211) protein is Prokaryotic ubiquitin-like protein UBact.